Consider the following 258-residue polypeptide: TLC domain-containing protein 4 A (258 aa).

7 helical membrane-spanning segments follow: residues 8–28 (YLIS…YIWI), 49–71 (IEWT…SCYC), 92–112 (FILK…IIYY), 118–138 (WPII…IGLY), 144–164 (LTLL…MKWF), 170–190 (LENH…FIFI), and 217–237 (IIFF…YLVI). One can recognise a TLC domain in the interval 46-245 (SSKIEWTNKI…VIKGILKHLS (200 aa)).

This sequence belongs to the TLCD4 family.

It localises to the membrane. In Dictyostelium discoideum (Social amoeba), this protein is TLC domain-containing protein 4 A (tlcd4a).